Consider the following 192-residue polypeptide: MVIGILGVQGAVREHQEMLHLLGVKTMIVKSSADLDGIDGLIFPGGESTTIRRLIDRYGLLDVLRRQADTLPMFGTCAGMILLASELTEGPSHLGAIPMTVRRNAFGRQIDSFETSLNVEGAGQDIEAVFIRAPFVEQVGEGVRVLAAIGIAAVVVETDLHLACSFHPELTSDRRLHDYFIQKIRRRTAVSV.

46 to 48 is an L-glutamine binding site; that stretch reads GES. Catalysis depends on Cys77, which acts as the Nucleophile. Residues Arg103 and 131 to 132 contribute to the L-glutamine site; that span reads IR. Active-site charge relay system residues include His167 and Glu169.

It belongs to the glutaminase PdxT/SNO family. As to quaternary structure, in the presence of PdxS, forms a dodecamer of heterodimers. Only shows activity in the heterodimer.

It catalyses the reaction aldehydo-D-ribose 5-phosphate + D-glyceraldehyde 3-phosphate + L-glutamine = pyridoxal 5'-phosphate + L-glutamate + phosphate + 3 H2O + H(+). It carries out the reaction L-glutamine + H2O = L-glutamate + NH4(+). The protein operates within cofactor biosynthesis; pyridoxal 5'-phosphate biosynthesis. Functionally, catalyzes the hydrolysis of glutamine to glutamate and ammonia as part of the biosynthesis of pyridoxal 5'-phosphate. The resulting ammonia molecule is channeled to the active site of PdxS. The sequence is that of Pyridoxal 5'-phosphate synthase subunit PdxT from Exiguobacterium sibiricum (strain DSM 17290 / CCUG 55495 / CIP 109462 / JCM 13490 / 255-15).